A 289-amino-acid polypeptide reads, in one-letter code: Urease accessory protein UreD (289 aa).

It belongs to the UreD family. In terms of assembly, ureD, UreF and UreG form a complex that acts as a GTP-hydrolysis-dependent molecular chaperone, activating the urease apoprotein by helping to assemble the nickel containing metallocenter of UreC. The UreE protein probably delivers the nickel.

The protein localises to the cytoplasm. In terms of biological role, required for maturation of urease via the functional incorporation of the urease nickel metallocenter. The protein is Urease accessory protein UreD of Xanthobacter autotrophicus (strain ATCC BAA-1158 / Py2).